Reading from the N-terminus, the 140-residue chain is Lysozyme B (140 aa).

A signal peptide spans 1 to 18 (MKAFIVLVALALAAPALG). The 122-residue stretch at 19–140 (RTMDRCSLAR…GWLPSIDDCF (122 aa)) folds into the C-type lysozyme domain. 4 disulfides stabilise this stretch: Cys-24-Cys-139, Cys-45-Cys-129, Cys-80-Cys-96, and Cys-92-Cys-110. Catalysis depends on residues Glu-50 and Asp-68.

The protein belongs to the glycosyl hydrolase 22 family. As to expression, found in the midgut.

It carries out the reaction Hydrolysis of (1-&gt;4)-beta-linkages between N-acetylmuramic acid and N-acetyl-D-glucosamine residues in a peptidoglycan and between N-acetyl-D-glucosamine residues in chitodextrins.. Its function is as follows. Unlikely to play an active role in the humoral immune defense. May have a function in the digestion of bacteria in the food. This Drosophila melanogaster (Fruit fly) protein is Lysozyme B (LysB).